Here is a 389-residue protein sequence, read N- to C-terminus: Glycerol-3-phosphate dehydrogenase [NAD(+)] 2 (389 aa).

Residues 40-45, phenylalanine 128, lysine 151, and alanine 184 each bind NAD(+); that span reads GSGNWG. Residue lysine 151 coordinates substrate. The active-site Proton acceptor is the lysine 244. Residues arginine 309 and glutamine 338 each contribute to the NAD(+) site. Substrate is bound at residue 309–310; that stretch reads RN.

This sequence belongs to the NAD-dependent glycerol-3-phosphate dehydrogenase family.

The protein resides in the cytoplasm. The enzyme catalyses sn-glycerol 3-phosphate + NAD(+) = dihydroxyacetone phosphate + NADH + H(+). The chain is Glycerol-3-phosphate dehydrogenase [NAD(+)] 2 (GPD2) from Zygosaccharomyces rouxii.